The following is a 178-amino-acid chain: Large ribosomal subunit protein uL6 (178 aa).

Belongs to the universal ribosomal protein uL6 family. As to quaternary structure, part of the 50S ribosomal subunit.

This protein binds to the 23S rRNA, and is important in its secondary structure. It is located near the subunit interface in the base of the L7/L12 stalk, and near the tRNA binding site of the peptidyltransferase center. This Francisella tularensis subsp. holarctica (strain FTNF002-00 / FTA) protein is Large ribosomal subunit protein uL6.